The following is a 111-amino-acid chain: Probable 4-amino-4-deoxy-L-arabinose-phosphoundecaprenol flippase subunit ArnE (111 aa).

The next 3 helical transmembrane spans lie at leucine 37–leucine 57, glutamine 65–phenylalanine 85, and leucine 91–isoleucine 111.

The protein belongs to the ArnE family. In terms of assembly, heterodimer of ArnE and ArnF.

The protein localises to the cell inner membrane. The protein operates within bacterial outer membrane biogenesis; lipopolysaccharide biosynthesis. Its function is as follows. Translocates 4-amino-4-deoxy-L-arabinose-phosphoundecaprenol (alpha-L-Ara4N-phosphoundecaprenol) from the cytoplasmic to the periplasmic side of the inner membrane. In Hamiltonella defensa subsp. Acyrthosiphon pisum (strain 5AT), this protein is Probable 4-amino-4-deoxy-L-arabinose-phosphoundecaprenol flippase subunit ArnE.